The chain runs to 607 residues: Lipid-A-disaccharide synthase (607 aa).

The interval 1 to 224 is unknown; it reads MFPQKITLWL…ASREAFRKPF (224 aa). A lipid-A-disaccharide synthase region spans residues 225–607; that stretch reads SNSCFISAGE…CLSLIFETAS (383 aa).

In the C-terminal section; belongs to the LpxB family.

The catalysed reaction is a lipid X + a UDP-2-N,3-O-bis[(3R)-3-hydroxyacyl]-alpha-D-glucosamine = a lipid A disaccharide + UDP + H(+). It participates in bacterial outer membrane biogenesis; LPS lipid A biosynthesis. Functionally, condensation of UDP-2,3-diacylglucosamine and 2,3-diacylglucosamine-1-phosphate to form lipid A disaccharide, a precursor of lipid A, a phosphorylated glycolipid that anchors the lipopolysaccharide to the outer membrane of the cell. The polypeptide is Lipid-A-disaccharide synthase (lpxB) (Chlamydia trachomatis serovar A (strain ATCC VR-571B / DSM 19440 / HAR-13)).